Consider the following 556-residue polypeptide: 2-isopropylmalate synthase (556 aa).

Residues 33 to 307 (PIWLSTDLRD…DPQLDFSDID (275 aa)) enclose the Pyruvate carboxyltransferase domain. Asp-42, His-246, His-248, and Asn-282 together coordinate Mg(2+). A regulatory domain region spans residues 439-556 (ASAPYALKGH…ALSQAESRAA (118 aa)).

This sequence belongs to the alpha-IPM synthase/homocitrate synthase family. LeuA type 2 subfamily. In terms of assembly, homodimer. Requires Mg(2+) as cofactor.

It is found in the cytoplasm. The catalysed reaction is 3-methyl-2-oxobutanoate + acetyl-CoA + H2O = (2S)-2-isopropylmalate + CoA + H(+). It functions in the pathway amino-acid biosynthesis; L-leucine biosynthesis; L-leucine from 3-methyl-2-oxobutanoate: step 1/4. Functionally, catalyzes the condensation of the acetyl group of acetyl-CoA with 3-methyl-2-oxobutanoate (2-ketoisovalerate) to form 3-carboxy-3-hydroxy-4-methylpentanoate (2-isopropylmalate). The sequence is that of 2-isopropylmalate synthase from Ectopseudomonas mendocina (strain ymp) (Pseudomonas mendocina).